A 172-amino-acid chain; its full sequence is NAD(P)H-quinone oxidoreductase subunit J (172 aa).

Belongs to the complex I 30 kDa subunit family. As to quaternary structure, NDH-1 can be composed of about 15 different subunits; different subcomplexes with different compositions have been identified which probably have different functions.

The protein localises to the cellular thylakoid membrane. The catalysed reaction is a plastoquinone + NADH + (n+1) H(+)(in) = a plastoquinol + NAD(+) + n H(+)(out). It carries out the reaction a plastoquinone + NADPH + (n+1) H(+)(in) = a plastoquinol + NADP(+) + n H(+)(out). NDH-1 shuttles electrons from an unknown electron donor, via FMN and iron-sulfur (Fe-S) centers, to quinones in the respiratory and/or the photosynthetic chain. The immediate electron acceptor for the enzyme in this species is believed to be plastoquinone. Couples the redox reaction to proton translocation, and thus conserves the redox energy in a proton gradient. Cyanobacterial NDH-1 also plays a role in inorganic carbon-concentration. In Synechococcus sp. (strain ATCC 27144 / PCC 6301 / SAUG 1402/1) (Anacystis nidulans), this protein is NAD(P)H-quinone oxidoreductase subunit J.